The following is a 702-amino-acid chain: Rho GTPase-activating protein 22 (702 aa).

Positions 43 to 151 (PVLKAGWLRK…WVQAIRRVIW (109 aa)) constitute a PH domain. Residues 161-355 (QRLEDTVHHE…VLIRKHGQLF (195 aa)) enclose the Rho-GAP domain. Disordered stretches follow at residues 360-433 (LEEP…HTLP), 438-457 (SFRQ…SSLE), 480-511 (RASS…FSST), and 555-596 (PSPL…TQAH). 2 positions are modified to phosphoserine: Ser-365 and Ser-397. Composition is skewed to polar residues over residues 407–421 (SRTS…TGPA), 438–456 (SFRQ…NSSL), 491–504 (GSAQ…NVPP), and 581–594 (SGSS…SPTQ). Residues 594-691 (QAHVRRCRAL…EEFFSTLGSL (98 aa)) adopt a coiled-coil conformation.

As to quaternary structure, interacts with VEZF1. Predominantly present in endothelial cells (at protein level).

It localises to the cytoplasm. It is found in the nucleus. Rho GTPase-activating protein involved in the signal transduction pathway that regulates endothelial cell capillary tube formation during angiogenesis. Acts as a GTPase activator for the RAC1 by converting it to an inactive GDP-bound state. Inhibits RAC1-dependent lamellipodia formation. May also play a role in transcription regulation via its interaction with VEZF1, by regulating activity of the endothelin-1 (EDN1) promoter. This chain is Rho GTPase-activating protein 22 (Arhgap22), found in Mus musculus (Mouse).